The chain runs to 135 residues: Transcription antitermination protein NusB (135 aa).

The protein belongs to the NusB family.

In terms of biological role, involved in transcription antitermination. Required for transcription of ribosomal RNA (rRNA) genes. Binds specifically to the boxA antiterminator sequence of the ribosomal RNA (rrn) operons. The chain is Transcription antitermination protein NusB from Shewanella piezotolerans (strain WP3 / JCM 13877).